The chain runs to 84 residues: Omega-conotoxin-like ArMKLT1-02 (84 aa).

Residues 1–22 (MKVTCMMIVAVLFLTAWTFVTA) form the signal peptide. The propeptide occupies 23–51 (DDSISALEDLFAKAHDKMENSEASPLNER). Disulfide bonds link Cys-53-Cys-71, Cys-60-Cys-75, and Cys-70-Cys-79.

Belongs to the conotoxin O1 superfamily. In terms of tissue distribution, expressed by the venom duct.

Its subcellular location is the secreted. In terms of biological role, omega-conotoxins act at presynaptic membranes, they bind and block voltage-gated calcium channels (Cav). The polypeptide is Omega-conotoxin-like ArMKLT1-02 (Conus arenatus (Sand-dusted cone)).